A 93-amino-acid polypeptide reads, in one-letter code: Probable endoribonuclease MazF1 (93 aa).

Belongs to the PemK/MazF family. As to quaternary structure, forms a complex with cognate antitoxin MazE1.

Its function is as follows. Toxic component of a type II toxin-antitoxin (TA) system, its cognate antitoxin is MazE1. Probably an endoribonuclease. The sequence is that of Probable endoribonuclease MazF1 (mazF1) from Mycobacterium tuberculosis (strain ATCC 25618 / H37Rv).